A 364-amino-acid polypeptide reads, in one-letter code: DNA-(apurinic or apyrimidinic site) endonuclease (364 aa).

Basic and acidic residues-rich tracts occupy residues Met-1–Asn-12 and Pro-23–Gln-39. The tract at residues Met-1 to Pro-42 is disordered. Glu-80 contacts Mg(2+). Tyr-182 is a catalytic residue. Mg(2+)-binding residues include Asp-222, Asn-224, and Asp-342. Residue Asp-222 is the Proton donor/acceptor of the active site.

It belongs to the DNA repair enzymes AP/exoA family. In terms of assembly, interacts with ROS1. ROS1 is required for APE1L to stably associate with the DNA substrate. The cofactor is Mg(2+). As to expression, expressed in leaves, flower buds and developing siliques. Not detected in roots.

The protein localises to the nucleus. Its subcellular location is the nucleolus. Functionally, apurinic/apyrimidinic (AP) endonuclease involved in active DNA demethylation and gene imprinting. According to a report, also displays an in vitro 3'-phosphatase activity. According to another report, has no in vitro 3'-phosphatase activity. Catalyzes the conversion of the 3'-blocking groups 3'-phosphor-alpha,beta-unsaturated aldehyde (3'-PUA) generated by ROS1 to 3'-OH. Has a strong non-specific affinity to DNA. Redundant with APE2 and at least one functional allele is required for seed viability. This Arabidopsis thaliana (Mouse-ear cress) protein is DNA-(apurinic or apyrimidinic site) endonuclease.